The sequence spans 235 residues: Small ribosomal subunit protein uS2c (235 aa).

This sequence belongs to the universal ribosomal protein uS2 family.

It localises to the plastid. It is found in the chloroplast. The sequence is that of Small ribosomal subunit protein uS2c (rps2) from Zygnema circumcarinatum (Green alga).